A 1816-amino-acid chain; its full sequence is uncharacterized protein (1816 aa).

Disordered stretches follow at residues 338-357 (DSSS…NNNN) and 562-605 (ELEK…IKPK). Low complexity predominate over residues 339–357 (SSSSSSNNNNNNNNNNNNN). Basic and acidic residues predominate over residues 562–577 (ELEKERIKKEKEDSKK). The span at 581 to 603 (KQSSSSSSSSTTTTSTTTSSTIK) shows a compositional bias: low complexity. A Helicase ATP-binding domain is found at 826–999 (LDIVDKRESA…FLKKIDPNRK (174 aa)). 839–846 (ASTSSGKT) is a binding site for ATP. The short motif at 949-952 (DEVH) is the DEAH box element. Residues 1198 to 1379 (QLDLVIERFQ…SVVSPSLCLS (182 aa)) enclose the Helicase C-terminal domain. The disordered stretch occupies residues 1388–1487 (TNGSANKSNE…TTTKTPTTTS (100 aa)). Residues 1395 to 1427 (SNEENKVQVKENEKEREKEKEKEKEKEKEKETI) show a composition bias toward basic and acidic residues. The span at 1445 to 1454 (NWDDDEEETA) shows a compositional bias: acidic residues. Over residues 1456 to 1487 (STKTTPATTPTTTTTENTPATTTTTKTPTTTS) the composition is skewed to low complexity.

This sequence belongs to the helicase family. SKI2 subfamily.

The protein resides in the nucleus. This is an uncharacterized protein from Dictyostelium discoideum (Social amoeba).